The chain runs to 70 residues: MIFKVFYQEKMTEVPVRENTKVLYLEATSEKDVRTKLNKFAYNIEFVQSVTGNHLEYEKENADLTLAEIV.

This sequence belongs to the RNA polymerase subunit epsilon family. As to quaternary structure, RNAP is composed of a core of 2 alpha, a beta and a beta' subunit. The core is associated with a delta subunit, and at least one of epsilon or omega. When a sigma factor is associated with the core the holoenzyme is formed, which can initiate transcription.

The enzyme catalyses RNA(n) + a ribonucleoside 5'-triphosphate = RNA(n+1) + diphosphate. A non-essential component of RNA polymerase (RNAP). The polypeptide is DNA-directed RNA polymerase subunit epsilon (Bacillus cereus (strain Q1)).